Here is a 389-residue protein sequence, read N- to C-terminus: MIDPTARAWAYLSRVAEPPCAQLAALVRCVGPVEAADRVRRGQVGNELAQHTGARREIDRAADDLELLMRRGGRLITPDDDEWPVLAFAAFSGAGARARPCGHSPLVLWALGPARLDEVAPRAAAVVGTRAATAYGEHVAADLAAGLAERDVAVVSGGAYGIDGAAHRAALDSEGITVAVLAGGFDIPYPAGHSALLHRIAQHGVLFTEYPPGVRPARHRFLTRNRLVAAVARAAVVVEAGLRSGAANTAAWARALGRVVAAVPGPVTSSASAGCHTLLRHGAELVTRADDIVEFVGHIGELAGDEPRPGAALDVLSEAERQVYEALPGRGAATIDEIAVGSGLLPAQVLGPLAILEVAGLAECRDGRWRILRAGAGQAAAKGAAARLV.

This sequence belongs to the DprA/Smf family.

Its function is as follows. May help load RecA onto ssDNA. The chain is Putative DNA processing protein DprA from Mycobacterium tuberculosis (strain CDC 1551 / Oshkosh).